Consider the following 289-residue polypeptide: Acetyl-coenzyme A carboxylase carboxyl transferase subunit beta (289 aa).

Residues 28–289 (VMTKCPKCKK…QGEGMAVWQN (262 aa)) enclose the CoA carboxyltransferase N-terminal domain. The Zn(2+) site is built by Cys32, Cys35, Cys51, and Cys54. The segment at 32–54 (CPKCKKIMYTKELLKNLKVCVNC) adopts a C4-type zinc-finger fold.

It belongs to the AccD/PCCB family. In terms of assembly, acetyl-CoA carboxylase is a heterohexamer composed of biotin carboxyl carrier protein (AccB), biotin carboxylase (AccC) and two subunits each of ACCase subunit alpha (AccA) and ACCase subunit beta (AccD). Zn(2+) is required as a cofactor.

It is found in the cytoplasm. The enzyme catalyses N(6)-carboxybiotinyl-L-lysyl-[protein] + acetyl-CoA = N(6)-biotinyl-L-lysyl-[protein] + malonyl-CoA. The protein operates within lipid metabolism; malonyl-CoA biosynthesis; malonyl-CoA from acetyl-CoA: step 1/1. Component of the acetyl coenzyme A carboxylase (ACC) complex. Biotin carboxylase (BC) catalyzes the carboxylation of biotin on its carrier protein (BCCP) and then the CO(2) group is transferred by the transcarboxylase to acetyl-CoA to form malonyl-CoA. This is Acetyl-coenzyme A carboxylase carboxyl transferase subunit beta from Bacillus cytotoxicus (strain DSM 22905 / CIP 110041 / 391-98 / NVH 391-98).